The primary structure comprises 429 residues: RNA-binding protein BRN2 (429 aa).

RRM domains lie at 12–93 (VKLF…YADG), 100–180 (HKLF…WADT), and 330–408 (ANLF…LKRD). Positions 410–429 (GQQQQQQQSKNPLFNGLLNS) are disordered. Over residues 418-429 (SKNPLFNGLLNS) the composition is skewed to polar residues.

In terms of tissue distribution, expressed in roots, stems, flowers and siliques.

The protein localises to the cytoplasm. Its function is as follows. RNA-binding protein involved in the regulation of flowering time. Acts as a repressor of the activity of SOC1, a transcriptional activator of flowering time. Binds to the 3'-UTR of SOC1 mRNA in the cytoplasm and participates in SOC1 mRNA decay, mediated by the distal region of the SOC1 3'-UTR. In Arabidopsis thaliana (Mouse-ear cress), this protein is RNA-binding protein BRN2.